A 267-amino-acid polypeptide reads, in one-letter code: Small ribosomal subunit protein uS3 (267 aa).

Residues 39–114 (IRKYLETNLK…RVNINIVEIR (76 aa)) form the KH type-2 domain. The span at 229–248 (ANNRGRGNNRGRGNSRQNGG) shows a compositional bias: low complexity. Residues 229–267 (ANNRGRGNNRGRGNSRQNGGRSRRPRQGQASTQGRGGNN) form a disordered region.

It belongs to the universal ribosomal protein uS3 family. As to quaternary structure, part of the 30S ribosomal subunit. Forms a tight complex with proteins S10 and S14.

Binds the lower part of the 30S subunit head. Binds mRNA in the 70S ribosome, positioning it for translation. The sequence is that of Small ribosomal subunit protein uS3 from Oenococcus oeni (strain ATCC BAA-331 / PSU-1).